Reading from the N-terminus, the 179-residue chain is Ribosome maturation factor RimM (179 aa).

Positions 102–179 constitute a PRC barrel domain; the sequence is DGEYYWYQLE…EMKVDWDADF (78 aa).

Belongs to the RimM family. As to quaternary structure, binds ribosomal protein uS19.

Its subcellular location is the cytoplasm. Functionally, an accessory protein needed during the final step in the assembly of 30S ribosomal subunit, possibly for assembly of the head region. Essential for efficient processing of 16S rRNA. May be needed both before and after RbfA during the maturation of 16S rRNA. It has affinity for free ribosomal 30S subunits but not for 70S ribosomes. The chain is Ribosome maturation factor RimM from Pseudomonas syringae pv. syringae (strain B728a).